The chain runs to 151 residues: Small ribosomal subunit protein uS15 (151 aa).

It belongs to the universal ribosomal protein uS15 family.

The protein is Small ribosomal subunit protein uS15 (RPS13) of Glycine max (Soybean).